Here is a 463-residue protein sequence, read N- to C-terminus: uncharacterized protein (463 aa).

A run of 12 helical transmembrane segments spans residues 21–40 (DFAC…FFYT), 50–72 (AGTM…GTIV), 84–104 (PYLL…FTTP), 112–132 (LIYA…INVP), 156–176 (LFAN…AAYL), 186–206 (GWQL…IFCF), 237–257 (LVVL…SNSV), 271–291 (LVKW…PFIP), 311–331 (IIGL…ILVC), 334–354 (IAAA…PETI), 367–387 (GLIY…GGVV), and 408–428 (LMGI…LALI).

This sequence belongs to the sodium:galactoside symporter (TC 2.A.2) family.

It localises to the cell membrane. This is an uncharacterized protein from Bacillus subtilis (strain 168).